Here is a 189-residue protein sequence, read N- to C-terminus: Peptidyl-tRNA hydrolase (189 aa).

His-15 contributes to the tRNA binding site. The Proton acceptor role is filled by His-20. Residues Phe-66, Asn-68, and Asn-114 each coordinate tRNA.

Belongs to the PTH family. As to quaternary structure, monomer.

Its subcellular location is the cytoplasm. It catalyses the reaction an N-acyl-L-alpha-aminoacyl-tRNA + H2O = an N-acyl-L-amino acid + a tRNA + H(+). In terms of biological role, hydrolyzes ribosome-free peptidyl-tRNAs (with 1 or more amino acids incorporated), which drop off the ribosome during protein synthesis, or as a result of ribosome stalling. Catalyzes the release of premature peptidyl moieties from peptidyl-tRNA molecules trapped in stalled 50S ribosomal subunits, and thus maintains levels of free tRNAs and 50S ribosomes. This Streptococcus equi subsp. equi (strain 4047) protein is Peptidyl-tRNA hydrolase.